Consider the following 202-residue polypeptide: MSEHGPLRIGIGGPVGAGKTTLTERLCAALRDDYSVAVITNDIYTSEDAEYLMRAQALPLERIRGVETGGCPHTAIREDASINLAAVADLRASFADLDVILIESGGDNLAATFSPELADLTIYVIDTAAGQDIPRKKGPGLARSDLLVINKTDLAPHVDVDLALLESDARTARGARPFVMAALKSGQGVAQIVAFLEREGGL.

A GTP-binding site is contributed by 13 to 20 (GPVGAGKT).

Belongs to the SIMIBI class G3E GTPase family. UreG subfamily. In terms of assembly, homodimer. UreD, UreF and UreG form a complex that acts as a GTP-hydrolysis-dependent molecular chaperone, activating the urease apoprotein by helping to assemble the nickel containing metallocenter of UreC. The UreE protein probably delivers the nickel.

The protein localises to the cytoplasm. Facilitates the functional incorporation of the urease nickel metallocenter. This process requires GTP hydrolysis, probably effectuated by UreG. This chain is Urease accessory protein UreG, found in Dinoroseobacter shibae (strain DSM 16493 / NCIMB 14021 / DFL 12).